The sequence spans 697 residues: MFS antiporter QDR3 (697 aa).

Over 1 to 141 (MSHSPNLSPQ…ARDYPNKIKY (141 aa)) the chain is Cytoplasmic. A disordered region spans residues 38-109 (HPIGHHGREQ…KPTSTSIKTN (72 aa)). 2 stretches are compositionally biased toward low complexity: residues 53-69 (NTTK…HTTT) and 85-99 (DLSS…YLSQ). The chain crosses the membrane as a helical span at residues 142 to 162 (LIVFIIAFASLAGPFGTSVML). Residues 163–180 (PAIDDIVNDLNTNVSTVN) are Extracellular-facing. N-linked (GlcNAc...) asparagine glycans are attached at residues asparagine 175 and asparagine 180. A helical transmembrane segment spans residues 181 to 201 (VSVGIYLLSLGIFPLWWSSFS). The Cytoplasmic segment spans residues 202–215 (ERFGRRSVYMVSFT). The helical transmembrane segment at 216–236 (LFVAFSIGTALSPNIAALIVL) threads the bilayer. At 237-240 (RVLQ) the chain is on the extracellular side. The chain crosses the membrane as a helical span at residues 241–261 (GGSSASVQAVGAGTIADLFIP). The Cytoplasmic portion of the chain corresponds to 262-268 (QERGQAM). The helical transmembrane segment at 269–289 (GLYYLGPLAGPFLAPILGGAV) threads the bilayer. Residues 290–296 (SQAWGWR) are Extracellular-facing. A helical membrane pass occupies residues 297–317 (ATQWLLMIISACSFVLITFFL). The Cytoplasmic portion of the chain corresponds to 318–485 (PETLRRVDTI…SIILLKHPPV (168 aa)). The segment at 338–367 (DNNGSQNEKIHDDFAGADNSSVHDIDGNPI) is disordered. A helical membrane pass occupies residues 486–506 (VLVISFSAISFAAIYFFNMAI). The Extracellular portion of the chain corresponds to 507-519 (SYEYARSPYNFSS). Residue asparagine 516 is glycosylated (N-linked (GlcNAc...) asparagine). A helical transmembrane segment spans residues 520–540 (VILGLMYIPNSVTYFMASIIG). Topologically, residues 541–565 (GKWNDRLLNRYAQKHGELVPESRLS) are cytoplasmic. Residues 566 to 586 (WNIVVAIILYPMACLIFGWTI) traverse the membrane as a helical segment. Over 587 to 590 (KYRE) the chain is Extracellular. Residues 591–611 (FWVIPLIGTALFGFASMLVIG) traverse the membrane as a helical segment. Residues 612–626 (ATVTYLVDSLPGKGA) are Cytoplasmic-facing. A helical membrane pass occupies residues 627–647 (TGVALNNLIRQILAAIATFIV). The Extracellular segment spans residues 648–653 (EPLLRA). The helical transmembrane segment at 654–674 (IGAGVLFSIIAGILLVSSLVL) threads the bilayer. The Cytoplasmic segment spans residues 675 to 697 (LYLKKRGAFFREHYDVMDLYAKL).

Belongs to the major facilitator superfamily. CAR1 family.

The protein localises to the cell membrane. MFS antiporter that does not display functional linkage as drug transporter and performs functions that significantly affect biofilm development and virulence. No substrate for transport has been identified yet, but plays an important role in the growth in the host. This Candida albicans (strain SC5314 / ATCC MYA-2876) (Yeast) protein is MFS antiporter QDR3 (QDR3).